Consider the following 314-residue polypeptide: DNA-directed RNA polymerase subunit alpha (314 aa).

The interval Met1–Asn227 is alpha N-terminal domain (alpha-NTD). Residues Lys241 to Asn314 form an alpha C-terminal domain (alpha-CTD) region.

This sequence belongs to the RNA polymerase alpha chain family. In plastids the minimal PEP RNA polymerase catalytic core is composed of four subunits: alpha, beta, beta', and beta''. When a (nuclear-encoded) sigma factor is associated with the core the holoenzyme is formed, which can initiate transcription.

The protein localises to the plastid. It localises to the chloroplast. It catalyses the reaction RNA(n) + a ribonucleoside 5'-triphosphate = RNA(n+1) + diphosphate. Its function is as follows. DNA-dependent RNA polymerase catalyzes the transcription of DNA into RNA using the four ribonucleoside triphosphates as substrates. This Rhodomonas salina (Cryptomonas salina) protein is DNA-directed RNA polymerase subunit alpha.